The sequence spans 431 residues: Enolase (431 aa).

Residue glutamine 166 coordinates (2R)-2-phosphoglycerate. Glutamate 208 acts as the Proton donor in catalysis. Aspartate 245, glutamate 288, and aspartate 315 together coordinate Mg(2+). (2R)-2-phosphoglycerate-binding residues include lysine 340, arginine 369, serine 370, and lysine 391. The active-site Proton acceptor is the lysine 340.

This sequence belongs to the enolase family. The cofactor is Mg(2+).

It localises to the cytoplasm. It is found in the secreted. The protein localises to the cell surface. It catalyses the reaction (2R)-2-phosphoglycerate = phosphoenolpyruvate + H2O. It participates in carbohydrate degradation; glycolysis; pyruvate from D-glyceraldehyde 3-phosphate: step 4/5. Its function is as follows. Catalyzes the reversible conversion of 2-phosphoglycerate (2-PG) into phosphoenolpyruvate (PEP). It is essential for the degradation of carbohydrates via glycolysis. This is Enolase from Clostridium botulinum (strain Loch Maree / Type A3).